We begin with the raw amino-acid sequence, 1104 residues long: Ankyrin repeat- and BTB/POZ domain-containing protein 3 (1104 aa).

Residues 168-188 traverse the membrane as a helical segment; sequence IVLSWGLAAHCTAAALAALSL. The segment at 260 to 301 is disordered; that stretch reads SCSGPGSGSGSGPGPSSGPGAAPAADKEREAPGGGAASGGAC. Over residues 264-276 the composition is skewed to gly residues; the sequence is PGSGSGSGPGPSS. ANK repeat units follow at residues 603–632, 649–678, 687–716, 730–759, and 825–854; these read QGMTPLMYACVRGDEAMVQMLLDAGADLNV, RHWTALTFAVLHGHIPVVQLLLDAGAKVEG, YSETPLQLAAAVGNFELVSLLLERGADPLI, GDMNSFSQAAAHGHRNVFRKLLAQPEKEKS, and TWLESLRIAFQQHRRPLIQCLLKEFKTIQE. One can recognise a BTB domain in the interval 923–989; sequence SDVTFLVEGR…LYYGGPESLL (67 aa).

Its subcellular location is the membrane. This Homo sapiens (Human) protein is Ankyrin repeat- and BTB/POZ domain-containing protein 3.